The sequence spans 113 residues: Nitrogenase-stabilizing/protective protein NifW (113 aa).

Belongs to the NifW family. Homotrimer; associates with NifD.

Its function is as follows. May protect the nitrogenase Fe-Mo protein from oxidative damage. The polypeptide is Nitrogenase-stabilizing/protective protein NifW (Dechloromonas aromatica (strain RCB)).